Reading from the N-terminus, the 490-residue chain is Betaine aldehyde dehydrogenase (490 aa).

D93 lines the K(+) pocket. An NAD(+)-binding site is contributed by 150 to 152 (GAW). The Charge relay system role is filled by K162. NAD(+) is bound at residue 176-179 (KPSE). A K(+)-binding site is contributed by V180. 230-233 (GIAS) contributes to the NAD(+) binding site. Residue L246 participates in K(+) binding. E252 acts as the Proton acceptor in catalysis. NAD(+)-binding residues include G254, C286, and E387. C286 serves as the catalytic Nucleophile. C286 is modified (cysteine sulfenic acid (-SOH)). K(+) contacts are provided by K457 and G460. The Charge relay system role is filled by E464.

Belongs to the aldehyde dehydrogenase family. Dimer of dimers. It depends on K(+) as a cofactor.

It carries out the reaction betaine aldehyde + NAD(+) + H2O = glycine betaine + NADH + 2 H(+). Its pathway is amine and polyamine biosynthesis; betaine biosynthesis via choline pathway; betaine from betaine aldehyde: step 1/1. Involved in the biosynthesis of the osmoprotectant glycine betaine. Catalyzes the irreversible oxidation of betaine aldehyde to the corresponding acid. This is Betaine aldehyde dehydrogenase from Yersinia pestis.